Here is a 357-residue protein sequence, read N- to C-terminus: MAPRRVRSFLRGLPALLLLLLFLGPWPAASHGGKYSREKNQPKPSPKRESGEEFRMEKLNQLWEKAQRLHLPPVRLAELHADLKIQERDELAWKKLKLDGLDEDGEKEARLIRNLNVILAKYGLDGKKDARQVTSNSLSGTQEDGLDDPRLEKLWHKAKTSGKFSGEELDKLWREFLHHKEKVHEYNVLLETLSRTEEIHENVISPSDLSDIKGSVLHSRHTELKEKLRSINQGLDRLRRVSHQGYSTEAEFEEPRVIDLWDLAQSANLTDKELEAFREELKHFEAKIEKHNHYQKQLEIAHEKLRHAESVGDGERVSRSREKHALLEGRTKELGYTVKKHLQDLSGRISRARHNEL.

The first 34 residues, 1–34 (MAPRRVRSFLRGLPALLLLLLFLGPWPAASHGGK), serve as a signal peptide directing secretion. A disordered region spans residues 32 to 52 (GGKYSREKNQPKPSPKRESGE). Residues 35-52 (YSREKNQPKPSPKRESGE) are compositionally biased toward basic and acidic residues. A phosphoserine mark is found at S50 and S135. A coiled-coil region spans residues 219 to 310 (SRHTELKEKL…AHEKLRHAES (92 aa)). The segment at 237–353 (RLRRVSHQGY…DLSGRISRAR (117 aa)) is LDL receptor binding. T248 is subject to Phosphothreonine. N-linked (GlcNAc...) asparagine glycosylation occurs at N268. The Prevents secretion from ER signature appears at 354 to 357 (HNEL).

It belongs to the alpha-2-MRAP family. As to quaternary structure, interacts with the LRP1/alpha-2-macroglobulin receptor heavy and light chains; the interaction is transient and coincides with a reduction of ligand binding by the receptor. Interacts with LRP2/glycoprotein 330. Interacts with LRP1B; binding is followed by internalization and degradation. Interacts with LDLR. Interacts with SORL1. Interacts with LRP1; this interaction is followed by rapid internalization. In terms of processing, N-glycosylated.

The protein localises to the rough endoplasmic reticulum lumen. The protein resides in the endoplasmic reticulum-Golgi intermediate compartment lumen. Its subcellular location is the golgi apparatus. It is found in the cis-Golgi network. It localises to the golgi apparatus lumen. The protein localises to the endosome lumen. The protein resides in the cell surface. Its function is as follows. Molecular chaperone for LDL receptor-related proteins that may regulate their ligand binding activity along the secretory pathway. In Homo sapiens (Human), this protein is Alpha-2-macroglobulin receptor-associated protein.